A 91-amino-acid polypeptide reads, in one-letter code: uncharacterized protein (91 aa).

This is an uncharacterized protein from Homo sapiens (Human).